The primary structure comprises 573 residues: Sulfate adenylyltransferase (573 aa).

Residues 1–169 form an N-terminal region; the sequence is MANSPHGGVL…IEAVNKLNHY (169 aa). The interval 170 to 394 is catalytic; the sequence is DYVALRYTPA…LRESSPPRHT (225 aa). Glutamine 197 is a binding site for sulfate. Residues 197–200 and 291–294 each bind ATP; these read QTRN and GRDH. Active-site residues include threonine 198, arginine 199, and asparagine 200. Residue arginine 199 participates in sulfate binding. Sulfate is bound at residue alanine 295. Valine 333 provides a ligand contact to ATP. The tract at residues 395 to 573 is allosteric regulation domain; adenylyl-sulfate kinase-like; it reads QGFTVFLTGY…LETEGFFDRA (179 aa). Residues 434–437, arginine 451, 477–478, and arginine 515 contribute to the 3'-phosphoadenylyl sulfate site; these read DTVR and IA.

In the N-terminal section; belongs to the sulfate adenylyltransferase family. It in the C-terminal section; belongs to the APS kinase family. In terms of assembly, homohexamer. Dimer of trimers.

It is found in the cytoplasm. The catalysed reaction is sulfate + ATP + H(+) = adenosine 5'-phosphosulfate + diphosphate. It functions in the pathway sulfur metabolism; hydrogen sulfide biosynthesis; sulfite from sulfate: step 1/3. Allosterically inhibited by 3'-phosphoadenosine 5'-phosphosulfate (PAPS). Its function is as follows. Catalyzes the first intracellular reaction of sulfate assimilation, forming adenosine-5'-phosphosulfate (APS) from inorganic sulfate and ATP. Plays an important role in sulfate activation as a component of the biosynthesis pathway of sulfur-containing amino acids. The chain is Sulfate adenylyltransferase from Aspergillus oryzae (strain ATCC 42149 / RIB 40) (Yellow koji mold).